A 268-amino-acid polypeptide reads, in one-letter code: Microtubule-associated protein RP/EB family member 1 (268 aa).

An N-acetylalanine modification is found at A2. In terms of domain architecture, Calponin-homology (CH) spans 14-116 (NLSRHDMLAW…FVQWFKKFFD (103 aa)). K66 carries the N6-crotonyllysine modification. Y124 is modified (phosphotyrosine). Positions 124–268 (YDPVAARQGQ…GGPQEEQEEY (145 aa)) are interaction with MTUS2/TIP150. Residues 146–187 (LNKPKKPLTSSSAAPQRPISTQRTAAAPKAGPGVVRKNPGVG) are disordered. The segment covering 153–169 (LTSSSAAPQRPISTQRT) has biased composition (polar residues). Residues S155 and S165 each carry the phosphoserine modification. One can recognise an EB1 C-terminal domain in the interval 185-255 (GVGNGDDEAA…LYATDEGFVI (71 aa)). The interval 185–268 (GVGNGDDEAA…GGPQEEQEEY (84 aa)) is interaction with CDK5RAP2. Positions 206-211 (TVEDLE) are interaction with APC. The DCTN1-binding stretch occupies residues 208-268 (EDLEKERDFY…GGPQEEQEEY (61 aa)). K220 is subject to N6-acetyllysine. Residues 220–242 (KLRNIELICQENEGENDPVLQRI) are APC-binding. The interaction with SKA1 stretch occupies residues 232–255 (EGENDPVLQRIVDILYATDEGFVI).

The protein belongs to the MAPRE family. As to quaternary structure, homodimer. Heterodimer with MAPRE3. Interacts with DCTN1, DCTN2, TERF1 and dynein intermediate chain. Interaction with DIAPH1 and DIAPH2. Interacts (via C-terminal residues 206-211) with APC (via C-terminal residues 2674-2843); the interaction inhibits association with and bundling of F-actin. Interacts with CLASP2, DST, KIF2C and STIM1; probably required for their targeting to the growing microtubule plus ends. Interacts with MTUS2; interaction is direct and probably targets MTUS2 to microtubules. Interacts (via C-terminus) with SKA1 (via SXIP motif); the interaction is direct and stabilizes the kinetochore-microtubule attachment of the SKA1 complex. Interacts with APC2. Interacts with CLASP1. Interacts with CDK5RAP2. Interacts with MACF1. Interacts with RABL2/RABL2A; binds preferentially to GTP-bound RABL2. Interacts with KCNAB2. Interacts (via C-terminus) with CLIP1. Interacts with SLAIN2 and SLAIN1. Interacts with KIF18B; this interaction is required for efficient accumulation of KIF18B at microtubule plus ends. Interacts with MISP. Interacts with KNSTRN. Interacts with NCKAP5L. Interacts with CAMSAP2. Interacts with PDE4DIP isoform 13/MMG8/SMYLE; this interaction is required for its recruitment to the Golgi apparatus. Forms a pericentrosomal complex with AKAP9, CDK5RAP2 and PDE4DIP isoform 13/MMG8/SMYLE; within this complex, MAPRE1 binding to CDK5RAP2 may be mediated by PDE4DIP. Interacts with AKNA. Interacts with GAS2L1, GAS2L2, and GAS2L3. Interacts with RARRES1 and AGBL2. Acetylation at Lys-220 by KAT2B/PCAF promotes dynamic kinetochore-microtubule interactions in early mitosis. Post-translationally, crotonylated by KAT5 during mitosis, promoting astral microtubule plasticity and dynamic connection between astral microtubules and the cortex during mitotic chromosome segregation, thereby ensuring accurate spindle positioning in mitosis. Decrotonylated by HDAC3. As to expression, ubiquitously expressed.

The protein resides in the cytoplasm. It localises to the cytoskeleton. Its subcellular location is the microtubule organizing center. It is found in the centrosome. The protein localises to the golgi apparatus. The protein resides in the spindle. It localises to the spindle pole. Its function is as follows. Plus-end tracking protein (+TIP) that binds to the plus-end of microtubules and regulates the dynamics of the microtubule cytoskeleton. Recruits other +TIP proteins to microtubules by binding to a conserved Ser-X-Leu-Pro (SXLP) motif in their polypeptide chains. Promotes cytoplasmic microtubule nucleation and elongation. Involved in mitotic spindle positioning by stabilizing microtubules and promoting dynamic connection between astral microtubules and the cortex during mitotic chromosome segregation. Assists chromosome alignment in metaphase by recruiting the SKA complex to the spindle and stabilizing its interactions with microtubule bundles (K-fibers). Also acts as a regulator of minus-end microtubule organization: interacts with the complex formed by AKAP9 and PDE4DIP, leading to recruit CAMSAP2 to the Golgi apparatus, thereby tethering non-centrosomal minus-end microtubules to the Golgi, an important step for polarized cell movement. Promotes elongation of CAMSAP2-decorated microtubule stretches on the minus-end of microtubules. Acts as a regulator of autophagosome transport via interaction with CAMSAP2. Functions downstream of Rho GTPases and DIAPH1 in stable microtubule formation. May play a role in cell migration. The polypeptide is Microtubule-associated protein RP/EB family member 1 (Homo sapiens (Human)).